The chain runs to 429 residues: MKNTYNLRSIAAKAISQVLDQGQSLSAVLPELQKNISDKDRALLQELCFGTLRVLPQLEWCIQQLMARPMTGKQRVFHYLIMVGLYQLIYTRIPPHAALAETVEGATVLKRPQLKGLINGVLRQFQRQQVELLERAVNNDSHYLHPSWLLARIKQAYPAQWQQILDANNQRPPMWLRVNRLHHSRSEYLELLTQADINAEPHPIYRDAVRLITPCAVNHLPGFELGWVTVQDASAQGCVDLLDPQNGEQILDLCAAPGGKTTHILEAAPKAHVLAVDIDEQRLSRVKENLQRLQLQAVVRVGDGRAPDTWCGDQQFDRILLDAPCSATGVIRRHPDIKWLRRDRDISELAQLQSEIIEAIWPKLKHGGVLVYATCSILPEENQQQIAAFLQRHPEAQLTETGTTAAPGKQNLPHPEDGDGFFYAKIIKK.

S-adenosyl-L-methionine contacts are provided by residues 254 to 260 (CAAPGGK), D277, D303, and D322. C375 (nucleophile) is an active-site residue.

It belongs to the class I-like SAM-binding methyltransferase superfamily. RsmB/NOP family.

The protein localises to the cytoplasm. The catalysed reaction is cytidine(967) in 16S rRNA + S-adenosyl-L-methionine = 5-methylcytidine(967) in 16S rRNA + S-adenosyl-L-homocysteine + H(+). Functionally, specifically methylates the cytosine at position 967 (m5C967) of 16S rRNA. This chain is Ribosomal RNA small subunit methyltransferase B, found in Yersinia pseudotuberculosis serotype O:1b (strain IP 31758).